Consider the following 34-residue polypeptide: Delta-theraphotoxin-Hm1b (34 aa).

3 disulfide bridges follow: cysteine 2–cysteine 16, cysteine 9–cysteine 21, and cysteine 15–cysteine 28. Phenylalanine 34 is modified (phenylalanine amide).

This sequence belongs to the neurotoxin 10 (Hwtx-1) family. 09 (HaTx) subfamily. As to expression, expressed by the venom gland.

The protein localises to the secreted. Functionally, gating-modifier toxin that potently and selectively acts on Nav1.1/SCN1A and Nav1.3/SCN3A. It enhances hNav1.1/SCN1A currents and delays fast inactivation of the channel (EC(50)=11.6 nM), leading to a sustained current. Similar effects are observed at Nav1.3/SCN3A (EC(50)=11.8 nM), but with less sustained currents. When tested on Nav1.2/SCN2A, the native toxin decreases the peak current by 50% at saturating concentration, whereas the recombinant toxin only shows a weak decrease of peak current. The native toxin specifically activates the voltage-gated sodium channel Nav1.1/SCN1A in somatosensory neurons to elicit acute pain and mechanical allodynia. When tested on Nav1.1/SCN1A, the toxin induces a hyperpolarising shift of the voltage-dependence of steady-state activation, and induces a depolarizing shift in the voltage dependence of inactivation. In addition, it does not modify the recovery from fast inactivation in Nav1.1/SCN1A. The toxin hydrophobic face probably interacts with the domain IV voltage-sensor of Nav1.1/SCN1A and Nav1.3/SCN3A and may trap the voltage-sensing S4 helix in a partially activated state. In vivo, intracerebroventricular injection into mice elicits convulsions, spasms, tremors and rapid death. When injected into mouse hindpaw, the toxin elicits an immediate and robust response to pain. However, intraplantar injection of toxin does not cause neurogenic inflammation or alter sensitivity to heat, indicative of a modality-specific effect on mechanosensitive neurons. In Heteroscodra maculata (Togo starburst tarantula), this protein is Delta-theraphotoxin-Hm1b.